The primary structure comprises 43 residues: CLAVATA3/ESR (CLE)-related protein 16D10 (43 aa).

Positions 1 to 30 are cleaved as a signal peptide; sequence MFTNSIKNLIIYLMPLMVTLMLLSVSFVDA. The short motif at 31 to 43 is the CLE element; that stretch reads GKKPSGPNPGGNN.

It belongs to the CLV3/ESR signal peptide family. In terms of tissue distribution, highly expressed exclusively within the subventral esophageal gland cell during syncytium formation in host plants.

Its subcellular location is the secreted. It is found in the host cytoplasm. The protein resides in the host extracellular space. In terms of biological role, plays a role in the differentiation or division of feeding cells (syncytia) induced in plant roots during infection. Promotes host root growth. The chain is CLAVATA3/ESR (CLE)-related protein 16D10 (16D10) from Meloidogyne arenaria (Peanut root-knot nematode).